Consider the following 626-residue polypeptide: MTNTVPSVPAVPNLPTQSDPFFNERSLEQLTQTVLQDLQQAGVSEAESAPTPLSVPTPALPTTSALAVPQSPTAIANVPAPPSSIDERSLAQLAQAVLQDPQLASAIASIFPSVTLPTSASVPRSVPVPPSFLPSLVPTAPPIHDEVGVIPHHQLPVPSQPTPAGLQQTASSKSGSGFYFIDEQVETAIAALHSNLTVFPQLTTSSIPTLTGAHSAGAVGFDIHQVRRDFPILQERVNGRPLVWFDNAATTQKPQVVIDRLSHYYQHENSNIHRAAHELAARSTDAYEAAREQVRHFLNAASTEEVVFVRGTTEAINLVAKSWGSQNLKEGDEIVITWLEHHANIVPWQQLSAETGARLRVVPVDDYGQVRLDEYQKLLSDRTKIVSFTQVSNALGTITPAKEIIELAHRYGAKVLLDGAQSVSHLAVDVQALDCDWFVFSGHKVFGPTGIGVLYGKQELLDATLPWQSGGNMIADVTFEKTVYQPAPARFEAGTGNIADAVGLGAALEYVQKIGLEAIAAYEHELLVHGTALLSQIPGLRLIGTAPHKAAVLSFVLEGFSPEAIGQALNREGIAVRAGHHCAQPILRRFGLETTVRPSLAFYNTFEELETLAAAIRRIQTGSLAL.

Disordered stretches follow at residues 1 to 21 and 41 to 64; these read MTNTVPSVPAVPNLPTQSDPF and AGVSEAESAPTPLSVPTPALPTTS. The tract at residues 1 to 225 is cargo-loading domain; it reads MTNTVPSVPA…AGAVGFDIHQ (225 aa). The segment at 226-626 is cysteine desulfurase domain; that stretch reads VRRDFPILQE…RRIQTGSLAL (401 aa). N6-(pyridoxal phosphate)lysine is present on K444. The active-site Cysteine persulfide intermediate is the C582.

This sequence belongs to the class-V pyridoxal-phosphate-dependent aminotransferase family. Csd subfamily. There are 1-2 copies of this protein in each type 2A encapsulin shell. Pyridoxal 5'-phosphate serves as cofactor.

The protein localises to the encapsulin nanocompartment. The catalysed reaction is (sulfur carrier)-H + L-cysteine = (sulfur carrier)-SH + L-alanine. Encapsulated enzyme is 7-fold more active than encapsulated enzyme. Cargo protein of a type 2A encapsulin nanocompartment probably involved in sulfur metabolism. Cysteine desulfurases mobilize the sulfur from L-cysteine to yield L-alanine, an essential step in sulfur metabolism for biosynthesis of a variety of sulfur-containing biomolecules. The chain is Cysteine desulfurase from Synechococcus elongatus (strain ATCC 33912 / PCC 7942 / FACHB-805) (Anacystis nidulans R2).